A 333-amino-acid chain; its full sequence is Eukaryotic translation initiation factor 3 subunit I (333 aa).

WD repeat units follow at residues Gly-8 to Thr-47, Gly-50 to Lys-91, Cys-144 to Asn-183, and Glu-186 to Thr-225. Thr-219 carries the phosphothreonine modification. At Lys-264 the chain carries N6-acetyllysine. Lys-282 participates in a covalent cross-link: Glycyl lysine isopeptide (Lys-Gly) (interchain with G-Cter in ubiquitin). Residues Gly-283 to Glu-324 form a WD 5 repeat. Position 308 is a phosphotyrosine (Tyr-308).

Belongs to the eIF-3 subunit I family. Component of the eukaryotic translation initiation factor 3 (eIF-3) complex, which is composed of 13 subunits: EIF3A, EIF3B, EIF3C, EIF3D, EIF3E, EIF3F, EIF3G, EIF3H, EIF3I, EIF3J, EIF3K, EIF3L and EIF3M. The eIF-3 complex appears to include 3 stable modules: module A is composed of EIF3A, EIF3B, EIF3G and EIF3I; module B is composed of EIF3F, EIF3H, and EIF3M; and module C is composed of EIF3C, EIF3D, EIF3E, EIF3K and EIF3L. EIF3C of module C binds EIF3B of module A and EIF3H of module B, thereby linking the three modules. EIF3J is a labile subunit that binds to the eIF-3 complex via EIF3B. The eIF-3 complex interacts with RPS6KB1 under conditions of nutrient depletion. Mitogenic stimulation leads to binding and activation of a complex composed of MTOR and RPTOR, leading to phosphorylation and release of RPS6KB1 and binding of EIF4B to eIF-3. Phosphorylated by TGF-beta type II receptor.

The protein localises to the cytoplasm. Its function is as follows. Component of the eukaryotic translation initiation factor 3 (eIF-3) complex, which is required for several steps in the initiation of protein synthesis. The eIF-3 complex associates with the 40S ribosome and facilitates the recruitment of eIF-1, eIF-1A, eIF-2:GTP:methionyl-tRNAi and eIF-5 to form the 43S pre-initiation complex (43S PIC). The eIF-3 complex stimulates mRNA recruitment to the 43S PIC and scanning of the mRNA for AUG recognition. The eIF-3 complex is also required for disassembly and recycling of post-termination ribosomal complexes and subsequently prevents premature joining of the 40S and 60S ribosomal subunits prior to initiation. The eIF-3 complex specifically targets and initiates translation of a subset of mRNAs involved in cell proliferation, including cell cycling, differentiation and apoptosis, and uses different modes of RNA stem-loop binding to exert either translational activation or repression. This is Eukaryotic translation initiation factor 3 subunit I from Oryctolagus cuniculus (Rabbit).